The sequence spans 283 residues: RNase adapter protein RapZ (283 aa).

8–15 provides a ligand contact to ATP; sequence GRSGSGKS. 56–59 contacts GTP; that stretch reads DVRN. The segment at 266–283 is RNA-binding; sequence RARGKNVQSRHRTLEKRK.

The protein belongs to the RapZ-like family. RapZ subfamily. In terms of assembly, homotrimer.

Its function is as follows. Modulates the synthesis of GlmS, by affecting the processing and stability of the regulatory small RNA GlmZ. When glucosamine-6-phosphate (GlcN6P) concentrations are high in the cell, RapZ binds GlmZ and targets it to cleavage by RNase E. Consequently, GlmZ is inactivated and unable to activate GlmS synthesis. Under low GlcN6P concentrations, RapZ is sequestered and inactivated by an other regulatory small RNA, GlmY, preventing GlmZ degradation and leading to synthesis of GlmS. The protein is RNase adapter protein RapZ of Yersinia enterocolitica serotype O:8 / biotype 1B (strain NCTC 13174 / 8081).